A 257-amino-acid polypeptide reads, in one-letter code: Flagellar brake protein YcgR 2 (257 aa).

The region spanning 131–244 (QRREFFRVQT…AERTLQRVVT (114 aa)) is the PilZ domain.

It belongs to the YcgR family. As to quaternary structure, monomer. Interacts with the flagellar basal bodies.

It localises to the bacterial flagellum basal body. In terms of biological role, acts as a flagellar brake, regulating swimming and swarming in a bis-(3'-5') cyclic diguanylic acid (c-di-GMP)-dependent manner. Binds 1 c-di-GMP dimer per subunit. Increasing levels of c-di-GMP lead to decreased motility. The chain is Flagellar brake protein YcgR 2 from Paraburkholderia phytofirmans (strain DSM 17436 / LMG 22146 / PsJN) (Burkholderia phytofirmans).